Consider the following 72-residue polypeptide: Translation initiation factor IF-1 (72 aa).

In terms of domain architecture, S1-like spans 1 to 72; that stretch reads MAKEEVLEFP…TKGRITYRFK (72 aa).

It belongs to the IF-1 family. In terms of assembly, component of the 30S ribosomal translation pre-initiation complex which assembles on the 30S ribosome in the order IF-2 and IF-3, IF-1 and N-formylmethionyl-tRNA(fMet); mRNA recruitment can occur at any time during PIC assembly.

It is found in the cytoplasm. One of the essential components for the initiation of protein synthesis. Stabilizes the binding of IF-2 and IF-3 on the 30S subunit to which N-formylmethionyl-tRNA(fMet) subsequently binds. Helps modulate mRNA selection, yielding the 30S pre-initiation complex (PIC). Upon addition of the 50S ribosomal subunit IF-1, IF-2 and IF-3 are released leaving the mature 70S translation initiation complex. This is Translation initiation factor IF-1 from Brucella abortus (strain 2308).